Reading from the N-terminus, the 432-residue chain is 2-oxoglutarate-dependent dioxygenase AOP2 (432 aa).

The region spanning 281 to 378 is the Fe2OG dioxygenase domain; it reads SGDDVEANDD…RYTAAIFTCP (98 aa). Positions 301, 303, and 358 each coordinate Fe cation. Position 369 (Arg-369) interacts with 2-oxoglutarate.

The protein belongs to the iron/ascorbate-dependent oxidoreductase family. Fe(2+) serves as cofactor.

In terms of biological role, 2-oxoglutarate-dependent dioxygenase involved in glucosinolates biosynthesis. Catalyzes the conversion of methylsulfinylalkyl glucosinolates to alkenyl glucosinolates. This is 2-oxoglutarate-dependent dioxygenase AOP2 (AOP2) from Arabidopsis thaliana (Mouse-ear cress).